The sequence spans 456 residues: Probable flavin-containing monoamine oxidase A (456 aa).

S-8alpha-FAD cysteine is present on C394.

This sequence belongs to the flavin monoamine oxidase family. FAD is required as a cofactor.

It carries out the reaction a secondary aliphatic amine + O2 + H2O = a primary amine + an aldehyde + H2O2. In Dictyostelium discoideum (Social amoeba), this protein is Probable flavin-containing monoamine oxidase A (maoA).